The chain runs to 2237 residues: Zinc finger protein 318 (2237 aa).

Composition is skewed to low complexity over residues 1–12 and 30–39; these read MYRSGSRSSVSS and GASSGPTRRP. The interval 1–221 is disordered; the sequence is MYRSGSRSSV…DMDRDDLTDD (221 aa). The tract at residues 1–1114 is interaction with AR; sequence MYRSGSRSSV…THMHNKKHTQ (1114 aa). Phosphoserine is present on serine 40. Residues 53 to 66 show a composition bias toward basic residues; the sequence is PARRHRSPSGHRGR. Residues serine 69, serine 109, and serine 111 each carry the phosphoserine modification. Residues 140-156 are compositionally biased toward basic and acidic residues; that stretch reads IRGESRADFARDGRGDH. Phosphoserine is present on residues serine 167 and serine 205. At tyrosine 237 the chain carries Phosphotyrosine. Residues serine 239 and serine 246 each carry the phosphoserine modification. A disordered region spans residues 263-350; that stretch reads LHRPEFSPQS…SPRFLDPEFR (88 aa). Basic and acidic residues-rich tracts occupy residues 274 to 290 and 297 to 317; these read CHDE…DKLK and RSEE…EKVH. The span at 321–332 shows a compositional bias: polar residues; the sequence is GDHSSFTSGTRN. Residues 348–376 are a coiled coil; it reads EFRELDLARRKREEEEEQSRSLSQELVGV. Residues serine 497, serine 502, serine 531, and serine 557 each carry the phosphoserine modification. Disordered stretches follow at residues 551–612 and 645–732; these read QEKR…ESLE and QERL…TKNS. Over residues 560–576 the composition is skewed to acidic residues; that stretch reads DIEDEEKFLYGDEEEDI. Residues lysine 577, lysine 583, lysine 596, and lysine 607 each participate in a glycyl lysine isopeptide (Lys-Gly) (interchain with G-Cter in SUMO2) cross-link. Residues 577-586 are compositionally biased toward basic and acidic residues; it reads KSESPLKSLE. A compositionally biased stretch (polar residues) spans 592 to 602; sequence GTRQKANSLPS. 2 stretches are compositionally biased toward basic and acidic residues: residues 658–677 and 692–706; these read SADR…HFSA and RSSD…ETHH. Phosphothreonine is present on threonine 865. Positions 904-1003 form a coiled coil; sequence EKNRASQKQK…SELDKVAQIL (100 aa). Basic and acidic residues-rich tracts occupy residues 945–964, 1013–1037, and 1047–1056; these read QQGE…KDPL, KSSN…EKEL, and KESKMNEKSC. 2 disordered regions span residues 945-966 and 1013-1072; these read QQGE…PLLM and KSSN…TVKQ. A Phosphoserine modification is found at serine 1032. A compositionally biased stretch (polar residues) spans 1058 to 1072; that stretch reads KSPSSTESLQPTVKQ. A Phosphoserine modification is found at serine 1059. Matrin-type zinc fingers lie at residues 1085–1119 and 1158–1180; these read AGSH…LDPY and FYCQ…VKGH. Disordered stretches follow at residues 1245-1289, 1302-1342, and 1366-1395; these read VKED…KKEP, SWKK…VGKA, and TTST…VSKP. 3 stretches are compositionally biased toward basic and acidic residues: residues 1280 to 1289, 1304 to 1313, and 1321 to 1341; these read QVKEEVKKEP, KKPEKEEEKG, and PKED…EVGK. The residue at position 1445 (serine 1445) is a Phosphoserine. 4 disordered regions span residues 1449-1497, 1614-1651, 1727-1770, and 1790-1867; these read KVEL…LSAP, HETK…SMSS, TSGS…HCQT, and EVYQ…MTGH. Residues 1469–1490 show a composition bias toward pro residues; the sequence is LPPPPPPPPPPPPPPPPPPPQA. Polar residues predominate over residues 1618–1639; the sequence is LSSSTLANGESSSLPRTESSDF. Low complexity predominate over residues 1640–1651; that stretch reads SSTCTLNSSMSS. Residues 1734 to 1749 show a composition bias toward basic and acidic residues; it reads DTHKDRPPEGKIRFDL. Residues 1757-1770 are compositionally biased toward polar residues; that stretch reads TDSTSHLSDTHCQT. Over residues 1796–1814 the composition is skewed to basic and acidic residues; sequence GCRESEMKRKTELKGKVAT. A coiled-coil region spans residues 1798-1827; that stretch reads RESEMKRKTELKGKVATEEEEEEEEEGANS. Residues 1815–1824 show a composition bias toward acidic residues; the sequence is EEEEEEEEEG. A compositionally biased stretch (polar residues) spans 1828-1840; the sequence is IEDSNSNHGNRNT. Serine 1878, serine 1908, serine 1988, serine 2044, serine 2054, serine 2140, serine 2143, serine 2194, and serine 2206 each carry phosphoserine. A disordered region spans residues 2039–2064; the sequence is EGAHSSSNSRNGRITSNSLETGHPVE. Over residues 2041 to 2058 the composition is skewed to polar residues; that stretch reads AHSSSNSRNGRITSNSLE. Residues 2178–2237 are disordered; it reads EDNDSALNLVKTPPSGSPSRDQVVGGNVSPREMPEQEAAVDVIPDHTRSNVYNSQDYLNG. The span at 2226–2237 shows a compositional bias: polar residues; that stretch reads SNVYNSQDYLNG.

As to quaternary structure, homodimer. Heterodimer of isoform 1 and isoform 2. Isoform 1 and isoform 2 interact with AR. As to expression, isoform 1 and isoform 2 are highly expressed in testis, moderately expressed in adrenal gland and uterus and faintly expressed in brain, kidney and liver. Isoform 1 is expressed more in adrenal gland, uterus and liver than isoform 2 is. Expression during testicular development of isoform 1 and isoform 2 is restricted to spermatocytes at the pachytene stage of meiotic prophase and to round and elongated spermatids.

It localises to the nucleus. In terms of biological role, acts as a transcriptional corepressor for AR-mediated transactivation function. May act as a transcriptional regulator during spermatogenesis and in particular, during meiotic division. Acts as a transcriptional coactivator for AR-mediated transactivation function. May act as a transcriptional regulator during spermatogenesis and in particular, during meiotic division. The chain is Zinc finger protein 318 (Znf318) from Mus musculus (Mouse).